We begin with the raw amino-acid sequence, 172 residues long: VLLDGNGEVVQNGGTYYLLPQVWAQGGGVQLAKTGEETCPLTVVQSPNELSDGKPIRIESRLRSAFIPDDDKVRIGFAYAPKCAPSPWWTVVEDEQEGLSVKLSEDESTQFDYPFKFEQVSDQLHSYKLLYCEGKHEKCASIGINRDQKGYRRLVVTEDYPLTVVLKKDESS.

2 cysteine pairs are disulfide-bonded: Cys39–Cys83 and Cys132–Cys139.

This sequence belongs to the protease inhibitor I3 (leguminous Kunitz-type inhibitor) family.

In terms of biological role, inhibition of trypsin. The polypeptide is Trypsin inhibitor DE-3 (Erythrina caffra (Kaffir tree)).